Reading from the N-terminus, the 838-residue chain is DNA gyrase subunit A (838 aa).

Position 2 is an N-acetylthreonine (Thr2). Positions 41 to 510 (LPEVRDGLKP…ADGDVSDEDL (470 aa)) constitute a Topo IIA-type catalytic domain. Tyr129 (O-(5'-phospho-DNA)-tyrosine intermediate) is an active-site residue. The Ca(2+) site is built by Asp504, Ser506, Glu508, and Asp515. The EF-hand domain occupies 504 to 516 (DVSDEDLIAREDV). The segment at 514–838 (EDVVVTITET…DANGADQTGN (325 aa)) is C-terminal domain CTD. A GyrA-box motif is present at residues 537–543 (QKRGGKG). The short motif at 743-749 (QGRGGKG) is the GyrA-box-1 element.

It belongs to the type II topoisomerase GyrA/ParC subunit family. Heterotetramer, composed of two GyrA and two GyrB chains. In the heterotetramer, GyrA contains the active site tyrosine that forms a transient covalent intermediate with DNA, while GyrB binds cofactors and catalyzes ATP hydrolysis. Ca(2+) is required as a cofactor.

The protein localises to the cytoplasm. The enzyme catalyses ATP-dependent breakage, passage and rejoining of double-stranded DNA.. DNA supercoiling inhibited by (fluoro)quinoline antibiotics such as sparfloxacin and levofloxacin, which usually act on GyrA. DNA supercoiling inhibited by the coumarin antibiotic novobiocin which acts on GyrB. Quinolones lead to gyrase-mediated dsDNA cleavage while preventing reclosure. DNA supercoiling activity inhibited by aminopyrazinamide and pyrrolamide derivatives, probably via effects on the GyrB subunit. DNA relaxation inhibited by ATP and its analogs. DNA supercoiling, relaxation, decatenation and quinolone-promoted DNA cleavage are inhibited by MfpA (50% inhibition occurs at 2 uM), inhibition of gyrase activities is enhanced in a concentration-dependent manner by MfpA. In terms of biological role, a type II topoisomerase that negatively supercoils closed circular double-stranded (ds) DNA in an ATP-dependent manner to maintain chromosomes in an underwound state, while in the absence of ATP it relaxes supercoiled dsDNA. Also catalyzes the interconversion of other topological isomers of dsDNA rings, including catenanes. Gyrase from M.tuberculosis has higher decatenation than supercoiling activity compared to E.coli; as M.tuberculosis only has 1 type II topoisomerase, gyrase has to fulfill the decatenation function of topoisomerase IV as well. At comparable concentrations M.tuberculosis gyrase cannot introduce as many negative supercoils into DNA as the E.coli enzyme, and its ATPase activity is lower, perhaps because it does not couple DNA wrapping and ATP binding as well as E.coli. Functionally, negative supercoiling favors strand separation, and DNA replication, transcription, recombination and repair, all of which involve strand separation. Type II topoisomerases break and join 2 DNA strands simultaneously in an ATP-dependent manner. In Mycobacterium tuberculosis (strain ATCC 25618 / H37Rv), this protein is DNA gyrase subunit A.